A 273-amino-acid chain; its full sequence is Undecaprenyl-diphosphatase (273 aa).

The next 8 membrane-spanning stretches (helical) occupy residues 13-35 (LGVVEGLTEFLPVSSTGHMIIVG), 45-65 (ANTFEVVIQLGSILAVVVMFW), 90-110 (LSLIHILLGMIPAVVMGLIFH), 116-136 (LFNPVNVMYALIVGGVLLIAA), 157-177 (AFVIGCFQCLALWPGFSRSGA), 190-210 (YAASEFSFLLAVPMMMGATVL), 222-242 (GDVPMFAVGFVMAFIVALIAI), and 252-272 (ISFIPFAIYRFIVAAAVYVVF).

Belongs to the UppP family.

Its subcellular location is the cell inner membrane. The enzyme catalyses di-trans,octa-cis-undecaprenyl diphosphate + H2O = di-trans,octa-cis-undecaprenyl phosphate + phosphate + H(+). Functionally, catalyzes the dephosphorylation of undecaprenyl diphosphate (UPP). Confers resistance to bacitracin. This chain is Undecaprenyl-diphosphatase, found in Klebsiella pneumoniae subsp. pneumoniae (strain ATCC 700721 / MGH 78578).